Reading from the N-terminus, the 445-residue chain is Inward rectifier potassium channel 4 (445 aa).

The Cytoplasmic portion of the chain corresponds to 1–55 (MHGHSRNGQAHVPRRKRRNRFVKKNGQCNVYFANLSNKSQRYMADIFTTCVDTRW). Residues 56 to 80 (RYMLMIFSAAFLVSWLFFGLLFWCI) form a helical membrane-spanning segment. The Extracellular portion of the chain corresponds to 81-120 (AFFHGDLEASPGVPAAGGPAAGGGGAAPVAPKPCIMHVNG). Positions 91 to 111 (PGVPAAGGPAAGGGGAAPVAP) are val/Gly/Ala/Pro stretch. An intramembrane region (helical; Pore-forming) is located at residues 121–132 (FLGAFLFSVETQ). Positions 133–139 (TTIGYGF) form an intramembrane region, pore-forming. The short motif at 134–139 (TIGYGF) is the Selectivity filter element. Topologically, residues 140-148 (RCVTEECPL) are extracellular. The helical transmembrane segment at 149–170 (AVIAVVVQSIVGCVIDSFMIGT) threads the bilayer. Topologically, residues 171 to 445 (IMAKMARPKK…NISYRRESAI (275 aa)) are cytoplasmic. Positions 443–445 (SAI) match the PDZ-binding motif.

The protein belongs to the inward rectifier-type potassium channel (TC 1.A.2.1) family. KCNJ4 subfamily. As to quaternary structure, homomultimeric and heteromultimeric association with KCNJ2 and KCNJ12. Interacts with DLG2 and DLG4. Associates, via its PDZ-recognition domain, with a complex containing LIN7A, LIN7B, LIN7C, DLG1, CASK and APBA1. Interacts with TAX1BP3. TAX1BP3 competes with LIN7 family members for KCNJ4 binding. In terms of tissue distribution, heart, skeletal muscle, and several different brain regions including the hippocampus.

It localises to the cell membrane. It is found in the postsynaptic cell membrane. The protein resides in the cytoplasmic vesicle membrane. The enzyme catalyses K(+)(in) = K(+)(out). Functionally, inward rectifier potassium channels are characterized by a greater tendency to allow potassium to flow into the cell rather than out of it. Their voltage dependence is regulated by the concentration of extracellular potassium; as external potassium is raised, the voltage range of the channel opening shifts to more positive voltages. The inward rectification is mainly due to the blockage of outward current by internal magnesium. Can be blocked by extracellular barium and cesium. The sequence is that of Inward rectifier potassium channel 4 (KCNJ4) from Homo sapiens (Human).